The following is a 963-amino-acid chain: Protocadherin alpha-C1 (963 aa).

A signal peptide spans 1–18 (MVGCGVAVLCLWVSCGAA). Cadherin domains lie at 19–124 (AGQL…SPLF), 125–233 (PAGD…APVF), 234–340 (ERSV…APEL), 349–445 (VPED…TPNF), and 446–555 (PQPQ…YPVI). Topologically, residues 19 to 683 (AGQLEYSVPE…GGQLSAQNLY (665 aa)) are extracellular. N38 carries an N-linked (GlcNAc...) asparagine glycan. Residues N248 and N274 are each glycosylated (N-linked (GlcNAc...) asparagine). N562 is a glycosylation site (N-linked (GlcNAc...) asparagine). The Cadherin 6 domain occupies 570 to 667 (VPRSARTGHL…NSVPQLLPDF (98 aa)). The helical transmembrane segment at 684–704 (LVIALACISFLFLGCLLFFVC) threads the bilayer. The Cytoplasmic portion of the chain corresponds to 705–963 (TKLHQSPGCC…GNSTTDNSDQ (259 aa)). PXXP repeat units lie at residues 812-815 (PRQP), 845-848 (PGGP), 886-889 (PGNP), and 904-907 (PGSP). Residues 812 to 907 (PRQPNPDWRY…PDKFIIPGSP (96 aa)) are 4 X 4 AA repeats of P-X-X-P. Residues 844 to 963 (GPGGPDQQWP…GNSTTDNSDQ (120 aa)) form a disordered region. The span at 922–936 (DKSDFITFGKKEETK) shows a compositional bias: basic and acidic residues.

It localises to the cell membrane. Functionally, potential calcium-dependent cell-adhesion protein. May be involved in the establishment and maintenance of specific neuronal connections in the brain. In Homo sapiens (Human), this protein is Protocadherin alpha-C1 (PCDHAC1).